A 127-amino-acid chain; its full sequence is Fluoride-specific ion channel FluC (127 aa).

The next 4 helical transmembrane spans lie at 4–24 (LLCAVFIGGGTGSVLRWWLGM), 35–55 (IGTLTANLVGAFVIGAGLAWF), 71–91 (TGFCGGLTTFSTFSAEVVFLL), and 101–121 (LNVMVNLLGSFAMTAVAFWLF). Na(+) contacts are provided by G75 and T78.

The protein belongs to the fluoride channel Fluc/FEX (TC 1.A.43) family.

The protein localises to the cell inner membrane. It carries out the reaction fluoride(in) = fluoride(out). Na(+) is not transported, but it plays an essential structural role and its presence is essential for fluoride channel function. Its function is as follows. Fluoride-specific ion channel. Important for reducing fluoride concentration in the cell, thus reducing its toxicity. The chain is Fluoride-specific ion channel FluC from Klebsiella pneumoniae (strain 342).